The sequence spans 440 residues: Metacaspase-1 (440 aa).

The interval 1–134 (MFPGSGRKTY…NPQGFGQNSG (134 aa)) is disordered. Residues 14–51 (APPPGPPNGYQYGPPPGAQGQYPPPQGYPPQGYPPQGY) are compositionally biased toward pro residues. Residues 52–81 (PPQGYAPQGYPPQGYAPQGYAPQGYQQQGG) are compositionally biased toward low complexity. The segment covering 82–94 (QQQGGQQQGGQQQ) has biased composition (gly residues). Polar residues predominate over residues 98–110 (RQTYATQEAQNFG). Residues His230 and Cys286 contribute to the active site.

Belongs to the peptidase C14B family.

In terms of biological role, involved in cell death (apoptosis). The polypeptide is Metacaspase-1 (MCA1) (Debaryomyces hansenii (strain ATCC 36239 / CBS 767 / BCRC 21394 / JCM 1990 / NBRC 0083 / IGC 2968) (Yeast)).